Here is a 216-residue protein sequence, read N- to C-terminus: Transmembrane emp24 domain-containing protein eca (216 aa).

The signal sequence occupies residues Met-1–Gly-20. The Lumenal segment spans residues Leu-21–Ser-182. The GOLD domain occupies Arg-30–Val-126. A coiled-coil region spans residues Ala-134–Asn-164. The helical transmembrane segment at Arg-183 to Met-203 threads the bilayer. Residues Arg-204–Val-216 are Cytoplasmic-facing. A Prevents secretion from ER motif is present at residues Lys-213 to Val-216.

Belongs to the EMP24/GP25L family.

The protein resides in the endoplasmic reticulum membrane. Eca and bai are essential, though not redundant, for dorsoventral patterning of the embryo. Specifically required during early embryogenesis for the activity of maternal tkv, while the zygotic tkv is not affected. Involved in Golgi organization. In Drosophila pseudoobscura pseudoobscura (Fruit fly), this protein is Transmembrane emp24 domain-containing protein eca.